The following is a 670-amino-acid chain: UvrABC system protein B (670 aa).

The 158-residue stretch at 26-183 folds into the Helicase ATP-binding domain; it reads EGLEDGLAHQ…RRLAELQYAR (158 aa). 39 to 46 is an ATP binding site; the sequence is GVTGSGKT. Residues 92 to 115 carry the Beta-hairpin motif; the sequence is YYDYYQPEAYVPSSDTFIEKDAAV. Positions 431-597 constitute a Helicase C-terminal domain; sequence QVDDLLSEIR…GLNKKVSDVL (167 aa). The region spanning 630 to 665 is the UVR domain; the sequence is DQKIRELEAQMYTHAQNLEFELAAGLRDEIHQLREQ.

It belongs to the UvrB family. In terms of assembly, forms a heterotetramer with UvrA during the search for lesions. Interacts with UvrC in an incision complex.

It localises to the cytoplasm. Functionally, the UvrABC repair system catalyzes the recognition and processing of DNA lesions. A damage recognition complex composed of 2 UvrA and 2 UvrB subunits scans DNA for abnormalities. Upon binding of the UvrA(2)B(2) complex to a putative damaged site, the DNA wraps around one UvrB monomer. DNA wrap is dependent on ATP binding by UvrB and probably causes local melting of the DNA helix, facilitating insertion of UvrB beta-hairpin between the DNA strands. Then UvrB probes one DNA strand for the presence of a lesion. If a lesion is found the UvrA subunits dissociate and the UvrB-DNA preincision complex is formed. This complex is subsequently bound by UvrC and the second UvrB is released. If no lesion is found, the DNA wraps around the other UvrB subunit that will check the other stand for damage. The protein is UvrABC system protein B of Serratia proteamaculans (strain 568).